Here is a 112-residue protein sequence, read N- to C-terminus: Tetracenomycin-F1 monooxygenase (112 aa).

One can recognise an ABM domain in the interval Phe-11 to Val-100.

Homotrimer.

It carries out the reaction tetracenomycin F1 + O2 = tetracenomycin D3 + H2O + H(+). It functions in the pathway antibiotic biosynthesis; tetracenomycin C biosynthesis. Inhibited by p-chloromercuribenzoic acid, N-ethylmaleimide and diethyl pyrocarbonate. Its function is as follows. Oxygenase required for conversion of tetracenomycin F1 to tetracenomycin D3. The protein is Tetracenomycin-F1 monooxygenase (tcmH) of Streptomyces glaucescens.